The following is a 339-amino-acid chain: Aspartate carbamoyltransferase catalytic subunit (339 aa).

Carbamoyl phosphate contacts are provided by Arg60 and Thr61. Residue Lys88 coordinates L-aspartate. Carbamoyl phosphate contacts are provided by Arg110, His143, and Gln146. Residues Arg183 and Arg254 each contribute to the L-aspartate site. Carbamoyl phosphate contacts are provided by Gly295 and Pro296.

This sequence belongs to the aspartate/ornithine carbamoyltransferase superfamily. ATCase family. In terms of assembly, heterododecamer (2C3:3R2) of six catalytic PyrB chains organized as two trimers (C3), and six regulatory PyrI chains organized as three dimers (R2).

The catalysed reaction is carbamoyl phosphate + L-aspartate = N-carbamoyl-L-aspartate + phosphate + H(+). The protein operates within pyrimidine metabolism; UMP biosynthesis via de novo pathway; (S)-dihydroorotate from bicarbonate: step 2/3. Functionally, catalyzes the condensation of carbamoyl phosphate and aspartate to form carbamoyl aspartate and inorganic phosphate, the committed step in the de novo pyrimidine nucleotide biosynthesis pathway. The protein is Aspartate carbamoyltransferase catalytic subunit of Prochlorococcus marinus (strain MIT 9312).